Reading from the N-terminus, the 231-residue chain is ATP phosphoribosyltransferase (231 aa).

The protein belongs to the ATP phosphoribosyltransferase family. Short subfamily. Heteromultimer composed of HisG and HisZ subunits.

The protein localises to the cytoplasm. The catalysed reaction is 1-(5-phospho-beta-D-ribosyl)-ATP + diphosphate = 5-phospho-alpha-D-ribose 1-diphosphate + ATP. The protein operates within amino-acid biosynthesis; L-histidine biosynthesis; L-histidine from 5-phospho-alpha-D-ribose 1-diphosphate: step 1/9. Functionally, catalyzes the condensation of ATP and 5-phosphoribose 1-diphosphate to form N'-(5'-phosphoribosyl)-ATP (PR-ATP). Has a crucial role in the pathway because the rate of histidine biosynthesis seems to be controlled primarily by regulation of HisG enzymatic activity. The polypeptide is ATP phosphoribosyltransferase (Brucella ovis (strain ATCC 25840 / 63/290 / NCTC 10512)).